The sequence spans 159 residues: Ribosomal RNA large subunit methyltransferase H (159 aa).

S-adenosyl-L-methionine-binding positions include leucine 76, glycine 108, and 127–132 (FGQLTL).

It belongs to the RNA methyltransferase RlmH family. Homodimer.

The protein localises to the cytoplasm. The enzyme catalyses pseudouridine(1915) in 23S rRNA + S-adenosyl-L-methionine = N(3)-methylpseudouridine(1915) in 23S rRNA + S-adenosyl-L-homocysteine + H(+). Its function is as follows. Specifically methylates the pseudouridine at position 1915 (m3Psi1915) in 23S rRNA. In Streptococcus gordonii (strain Challis / ATCC 35105 / BCRC 15272 / CH1 / DL1 / V288), this protein is Ribosomal RNA large subunit methyltransferase H.